Reading from the N-terminus, the 178-residue chain is ATP synthase subunit delta (178 aa).

The protein belongs to the ATPase delta chain family. F-type ATPases have 2 components, F(1) - the catalytic core - and F(0) - the membrane proton channel. F(1) has five subunits: alpha(3), beta(3), gamma(1), delta(1), epsilon(1). F(0) has three main subunits: a(1), b(2) and c(10-14). The alpha and beta chains form an alternating ring which encloses part of the gamma chain. F(1) is attached to F(0) by a central stalk formed by the gamma and epsilon chains, while a peripheral stalk is formed by the delta and b chains.

The protein resides in the cell inner membrane. Its function is as follows. F(1)F(0) ATP synthase produces ATP from ADP in the presence of a proton or sodium gradient. F-type ATPases consist of two structural domains, F(1) containing the extramembraneous catalytic core and F(0) containing the membrane proton channel, linked together by a central stalk and a peripheral stalk. During catalysis, ATP synthesis in the catalytic domain of F(1) is coupled via a rotary mechanism of the central stalk subunits to proton translocation. In terms of biological role, this protein is part of the stalk that links CF(0) to CF(1). It either transmits conformational changes from CF(0) to CF(1) or is implicated in proton conduction. The polypeptide is ATP synthase subunit delta (Ectopseudomonas mendocina (strain ymp) (Pseudomonas mendocina)).